We begin with the raw amino-acid sequence, 607 residues long: Glutamine--fructose-6-phosphate aminotransferase [isomerizing] (607 aa).

Cysteine 2 (nucleophile; for GATase activity) is an active-site residue. One can recognise a Glutamine amidotransferase type-2 domain in the interval 2–217; it reads CGIIGIIGND…DGDWAVLTRN (216 aa). SIS domains are found at residues 283–422 and 455–597; these read IGID…ARGA and VCHD…VDQP. The active-site For Fru-6P isomerization activity is lysine 602.

Homodimer.

The protein resides in the cytoplasm. It carries out the reaction D-fructose 6-phosphate + L-glutamine = D-glucosamine 6-phosphate + L-glutamate. Functionally, catalyzes the first step in hexosamine metabolism, converting fructose-6P into glucosamine-6P using glutamine as a nitrogen source. The chain is Glutamine--fructose-6-phosphate aminotransferase [isomerizing] from Brucella suis biovar 1 (strain 1330).